We begin with the raw amino-acid sequence, 308 residues long: Phenylcoumaran benzylic ether reductase Pyrc5 (308 aa).

NADP(+)-binding positions include 11–17 (GGTGYIG), Arg36, and Lys45. Residue Lys133 is the Proton acceptor of the active site. Arg137 serves as a coordination point for NADP(+).

The protein belongs to the NmrA-type oxidoreductase family. Isoflavone reductase subfamily.

It carries out the reaction (-)-dehydrodiconiferyl alcohol + NADPH + H(+) = (S)-isodihydrodehydrodiconiferyl alcohol + NADP(+). It catalyses the reaction (+)-dehydrodiconiferyl alcohol + NADPH + H(+) = (R)-isodihydrodehydrodiconiferyl alcohol + NADP(+). Functionally, oxidoreductase involved in lignan biosynthesis. Catalyzes the NADPH-dependent reduction of phenylcoumaran benzylic ethers. Converts dehydrodiconiferyl alcohol (DDC) to isodihydrodehydrodiconiferyl alcohol (IDDDC). This chain is Phenylcoumaran benzylic ether reductase Pyrc5, found in Pyrus communis (Pear).